The following is a 220-amino-acid chain: Deoxyribose-phosphate aldolase 1 (220 aa).

D89 serves as the catalytic Proton donor/acceptor. The Schiff-base intermediate with acetaldehyde role is filled by K151. K180 serves as the catalytic Proton donor/acceptor.

It belongs to the DeoC/FbaB aldolase family. DeoC type 1 subfamily.

The protein localises to the cytoplasm. It catalyses the reaction 2-deoxy-D-ribose 5-phosphate = D-glyceraldehyde 3-phosphate + acetaldehyde. The protein operates within carbohydrate degradation; 2-deoxy-D-ribose 1-phosphate degradation; D-glyceraldehyde 3-phosphate and acetaldehyde from 2-deoxy-alpha-D-ribose 1-phosphate: step 2/2. Its function is as follows. Catalyzes a reversible aldol reaction between acetaldehyde and D-glyceraldehyde 3-phosphate to generate 2-deoxy-D-ribose 5-phosphate. The chain is Deoxyribose-phosphate aldolase 1 from Staphylococcus aureus (strain MRSA252).